A 142-amino-acid polypeptide reads, in one-letter code: MLLHIIARGRIGRGPEAELVERYMKRVTWAQKISELPDTGGRVPAAAAGSRTILLDEGGEQMSSLEFANLLENWRDGGVREARFCIGAADGFTPDERKGADKVIAFGRATWPHLMARAMLAEQLWRATSIIAGHPYHREGRQ.

Residues leucine 55 and glycine 87 each coordinate S-adenosyl-L-methionine.

Belongs to the RNA methyltransferase RlmH family. As to quaternary structure, homodimer.

It localises to the cytoplasm. It catalyses the reaction pseudouridine(1915) in 23S rRNA + S-adenosyl-L-methionine = N(3)-methylpseudouridine(1915) in 23S rRNA + S-adenosyl-L-homocysteine + H(+). Its function is as follows. Specifically methylates the pseudouridine at position 1915 (m3Psi1915) in 23S rRNA. The sequence is that of Ribosomal RNA large subunit methyltransferase H from Sphingopyxis alaskensis (strain DSM 13593 / LMG 18877 / RB2256) (Sphingomonas alaskensis).